Reading from the N-terminus, the 124-residue chain is Putative iron-sulfur cluster insertion protein ErpA (124 aa).

Residues C52, C116, and C118 each coordinate iron-sulfur cluster.

The protein belongs to the HesB/IscA family. Homodimer. Iron-sulfur cluster serves as cofactor.

In terms of biological role, required for insertion of 4Fe-4S clusters. The chain is Putative iron-sulfur cluster insertion protein ErpA from Delftia acidovorans (strain DSM 14801 / SPH-1).